A 268-amino-acid polypeptide reads, in one-letter code: 4-hydroxy-tetrahydrodipicolinate reductase (268 aa).

NAD(+)-binding positions include 8-13 (GACGKM), Asp34, 95-97 (GTT), and 121-124 (APNF). Residue His151 is the Proton donor/acceptor of the active site. (S)-2,3,4,5-tetrahydrodipicolinate is bound at residue His152. The Proton donor role is filled by Lys155. 161–162 (GT) is a binding site for (S)-2,3,4,5-tetrahydrodipicolinate.

This sequence belongs to the DapB family.

The protein localises to the cytoplasm. It catalyses the reaction (S)-2,3,4,5-tetrahydrodipicolinate + NAD(+) + H2O = (2S,4S)-4-hydroxy-2,3,4,5-tetrahydrodipicolinate + NADH + H(+). The enzyme catalyses (S)-2,3,4,5-tetrahydrodipicolinate + NADP(+) + H2O = (2S,4S)-4-hydroxy-2,3,4,5-tetrahydrodipicolinate + NADPH + H(+). Its pathway is amino-acid biosynthesis; L-lysine biosynthesis via DAP pathway; (S)-tetrahydrodipicolinate from L-aspartate: step 4/4. Its function is as follows. Catalyzes the conversion of 4-hydroxy-tetrahydrodipicolinate (HTPA) to tetrahydrodipicolinate. This chain is 4-hydroxy-tetrahydrodipicolinate reductase, found in Dictyoglomus turgidum (strain DSM 6724 / Z-1310).